The sequence spans 83 residues: Small ribosomal subunit protein bS20 (83 aa).

Basic residues predominate over residues methionine 1–alanine 11. A disordered region spans residues methionine 1 to aspartate 44.

It belongs to the bacterial ribosomal protein bS20 family.

In terms of biological role, binds directly to 16S ribosomal RNA. This Desulforapulum autotrophicum (strain ATCC 43914 / DSM 3382 / VKM B-1955 / HRM2) (Desulfobacterium autotrophicum) protein is Small ribosomal subunit protein bS20.